We begin with the raw amino-acid sequence, 37 residues long: Beta-2-microglobulin (37 aa).

The region spanning Gly-11–Glu-37 is the Ig-like C1-type domain.

It belongs to the beta-2-microglobulin family. As to quaternary structure, heterodimer of an alpha chain and a beta chain. Beta-2-microglobulin is the beta-chain of major histocompatibility complex class I molecules.

The protein localises to the secreted. In terms of biological role, component of the class I major histocompatibility complex (MHC). Involved in the presentation of peptide antigens to the immune system. The sequence is that of Beta-2-microglobulin (b2m) from Oreochromis niloticus (Nile tilapia).